The primary structure comprises 510 residues: Beta-glucosidase 34 (510 aa).

The signal sequence occupies residues 1–26; the sequence is MGNGGRCMVEVVILLVLMAMSQGCDA. Asparagine 28 is a glycosylation site (N-linked (GlcNAc...) asparagine). Glutamine 52 provides a ligand contact to a beta-D-glucoside. Asparagine 120 carries an N-linked (GlcNAc...) asparagine glycan. A beta-D-glucoside contacts are provided by residues histidine 153 and 198-199; that span reads NE. Glutamate 199 acts as the Proton donor in catalysis. Cysteine 218 and cysteine 226 form a disulfide bridge. N-linked (GlcNAc...) asparagine glycosylation is found at asparagine 279 and asparagine 331. An a beta-D-glucoside-binding site is contributed by tyrosine 342. N-linked (GlcNAc...) asparagine glycosylation occurs at asparagine 360. Residues glutamate 415, tryptophan 465, 472-473, and phenylalanine 481 each bind a beta-D-glucoside; that span reads EW. The active-site Nucleophile is the glutamate 415.

Belongs to the glycosyl hydrolase 1 family.

It catalyses the reaction Hydrolysis of terminal, non-reducing beta-D-glucosyl residues with release of beta-D-glucose.. This Oryza sativa subsp. japonica (Rice) protein is Beta-glucosidase 34 (BGLU34).